The primary structure comprises 529 residues: RE1-silencing transcription factor B (529 aa).

Residues 156–178 (FRCKPCQYKAESEEEFVHHIKIH) form a C2H2-type 1 zinc finger. Residues 188–210 (SNKKAQGNEADSSISEESDVSKG) are disordered. 7 consecutive C2H2-type zinc fingers follow at residues 212-234 (IQCD…LKHH), 244-266 (YKCT…LRNH), 272-294 (YTCS…IRTH), 300-322 (YQCI…MRTH), 328-351 (FKCE…RQVH), 357-379 (LTCP…VELH), and 385-408 (FLCP…KSRH). The interval 484–529 (LSSTQKKIKTSDARPEKILDKSRKSSCVKRKSDLLENSNDTQTSTV) is disordered. Over residues 492–506 (KTSDARPEKILDKSR) the composition is skewed to basic and acidic residues. Polar residues predominate over residues 518-529 (LENSNDTQTSTV).

The protein localises to the nucleus. It is found in the cytoplasm. In terms of biological role, transcriptional repressor which binds neuron-restrictive silencer element (NRSE) and represses neuronal gene transcription in non-neuronal cells. Plays a role in the early development of the nervous system and is required for proper patterning of the neuroectoderm during gastrulation. This involves the correct speciation of the neuroepithelial domain and adequate development of the non-neural ectoderm. This chain is RE1-silencing transcription factor B (rest-b), found in Xenopus laevis (African clawed frog).